The sequence spans 114 residues: Large ribosomal subunit protein uL18 (114 aa).

Belongs to the universal ribosomal protein uL18 family. As to quaternary structure, part of the 50S ribosomal subunit; part of the 5S rRNA/L5/L18/L25 subcomplex. Contacts the 23S rRNA. Contacts protein L27 and the 5S rRNA.

Its function is as follows. This is one of the proteins that bind and probably mediate the attachment of the 5S RNA into the large ribosomal subunit, where it forms part of the central protuberance. This chain is Large ribosomal subunit protein uL18 (rplR), found in Deinococcus radiodurans (strain ATCC 13939 / DSM 20539 / JCM 16871 / CCUG 27074 / LMG 4051 / NBRC 15346 / NCIMB 9279 / VKM B-1422 / R1).